The chain runs to 305 residues: tRNA uridine(34) hydroxylase (305 aa).

The 95-residue stretch at 126–220 (CDPEVTVIDT…YLEEVPAQES (95 aa)) folds into the Rhodanese domain. The active-site Cysteine persulfide intermediate is the Cys-180.

It belongs to the TrhO family.

The enzyme catalyses uridine(34) in tRNA + AH2 + O2 = 5-hydroxyuridine(34) in tRNA + A + H2O. Functionally, catalyzes oxygen-dependent 5-hydroxyuridine (ho5U) modification at position 34 in tRNAs. This is tRNA uridine(34) hydroxylase from Nostoc punctiforme (strain ATCC 29133 / PCC 73102).